A 505-amino-acid polypeptide reads, in one-letter code: Histidine ammonia-lyase (505 aa).

A cross-link (5-imidazolinone (Ala-Gly)) is located at residues 141 to 143 (ASG). 2,3-didehydroalanine (Ser) is present on serine 142.

The protein belongs to the PAL/histidase family. Contains an active site 4-methylidene-imidazol-5-one (MIO), which is formed autocatalytically by cyclization and dehydration of residues Ala-Ser-Gly.

It localises to the cytoplasm. It carries out the reaction L-histidine = trans-urocanate + NH4(+). It functions in the pathway amino-acid degradation; L-histidine degradation into L-glutamate; N-formimidoyl-L-glutamate from L-histidine: step 1/3. The sequence is that of Histidine ammonia-lyase from Bacillus cereus (strain AH187).